The chain runs to 664 residues: Metal-nicotianamine transporter YSL2 (664 aa).

The next 14 membrane-spanning stretches (helical) occupy residues Ile31 to Leu51, Leu55 to Leu75, Cys103 to Leu123, Gly147 to Val167, Gly209 to Gly229, Leu268 to Ile288, Phe314 to Phe334, Ile378 to Ile398, Phe409 to Gly429, Val457 to Leu477, Val496 to Phe516, Ser549 to Ala569, Phe594 to Trp614, and Val629 to Leu649.

The protein belongs to the YSL (TC 2.A.67.2) family. Expressed in roots, leaves and weakly in shoots. Restricted to the veins, to the central cylinder of the young roots and to the pericycle and the endodermis cells facing the meta-xylem tubes in older roots. Expressed in the vasculature of sepals, petals, anthers, stigma and siliques, but not in developing seeds or in meristematic zones.

The protein localises to the cell membrane. In terms of biological role, may be involved in the lateral transport of nicotianamine-chelated metals in the vasculature. The protein is Metal-nicotianamine transporter YSL2 (YSL2) of Arabidopsis thaliana (Mouse-ear cress).